The following is a 279-amino-acid chain: Acetylglutamate kinase (279 aa).

Residues 64 to 65 (GG), arginine 86, and asparagine 177 contribute to the substrate site.

The protein belongs to the acetylglutamate kinase family. ArgB subfamily.

The protein localises to the cytoplasm. It carries out the reaction N-acetyl-L-glutamate + ATP = N-acetyl-L-glutamyl 5-phosphate + ADP. Its pathway is amino-acid biosynthesis; L-arginine biosynthesis; N(2)-acetyl-L-ornithine from L-glutamate: step 2/4. In terms of biological role, catalyzes the ATP-dependent phosphorylation of N-acetyl-L-glutamate. In Campylobacter jejuni subsp. jejuni serotype O:23/36 (strain 81-176), this protein is Acetylglutamate kinase.